Reading from the N-terminus, the 364-residue chain is Peptide chain release factor 1 (364 aa).

Gln237 is subject to N5-methylglutamine.

It belongs to the prokaryotic/mitochondrial release factor family. In terms of processing, methylated by PrmC. Methylation increases the termination efficiency of RF1.

The protein localises to the cytoplasm. Peptide chain release factor 1 directs the termination of translation in response to the peptide chain termination codons UAG and UAA. The polypeptide is Peptide chain release factor 1 (Mycoplasma mycoides subsp. mycoides SC (strain CCUG 32753 / NCTC 10114 / PG1)).